The sequence spans 184 residues: Photosystem I assembly protein Ycf4 (184 aa).

A run of 2 helical transmembrane segments spans residues 22–42 (FCWA…GTSS) and 57–77 (IIFF…LFIS).

Belongs to the Ycf4 family.

The protein localises to the plastid. It localises to the chloroplast thylakoid membrane. Its function is as follows. Seems to be required for the assembly of the photosystem I complex. The chain is Photosystem I assembly protein Ycf4 from Olimarabidopsis pumila (Dwarf rocket).